Here is a 372-residue protein sequence, read N- to C-terminus: MSRRRFDCRSISGLLTTTPQIPIKMENFNNFYILTSKELGRGKFAVVRQCISKSTGQEYAAKFLKKRRRGQDCRAEILHEIAVLELAKSCPRVINLHEVYENTSEIILILEYAAGGEIFSLCLPELAEMVSENDVIRLIKQILEGVYYLHQNNIVHLDLKPQNILLSSIYPLGDIKIVDFGMSRKIGHACELREIMGTPEYLAPEILNYDPITTATDMWNIGIIAYMLLTHTSPFVGEDNQETYLNISQVNVDYSEETFSSVSQLATDFIQSLLVKNPEKRPTAEICLSHSWLQQWDFENLFHPEETSSSSQTQDHSVRSSEDKTSKSSCNGTCGDREDKENIPEDSSMVSKRFRFDDSLPNPHELVSDLLC.

In terms of domain architecture, Protein kinase spans 33-293; the sequence is ILTSKELGRG…AEICLSHSWL (261 aa). ATP-binding positions include 39–47 and lysine 62; that span reads LGRGKFAVV. Aspartate 158 functions as the Proton acceptor in the catalytic mechanism. Residues 305 to 362 form a disordered region; the sequence is EETSSSSQTQDHSVRSSEDKTSKSSCNGTCGDREDKENIPEDSSMVSKRFRFDDSLPN. Basic and acidic residues predominate over residues 316–326; sequence HSVRSSEDKTS.

The protein belongs to the protein kinase superfamily. CAMK Ser/Thr protein kinase family. DAP kinase subfamily. In terms of assembly, interacts with CHP1; the interaction induces CHP1 to translocate from the Golgi to the nucleus. Autophosphorylated. As to expression, highly expressed in placenta, lung, pancreas. Lower levels in heart, brain, liver, skeletal muscle and kidney.

It is found in the nucleus. The protein localises to the cell membrane. The protein resides in the endoplasmic reticulum-Golgi intermediate compartment. It carries out the reaction L-seryl-[protein] + ATP = O-phospho-L-seryl-[protein] + ADP + H(+). The catalysed reaction is L-threonyl-[protein] + ATP = O-phospho-L-threonyl-[protein] + ADP + H(+). Its function is as follows. Phosphorylates myosin light chains. Acts as a positive regulator of apoptosis. The sequence is that of Serine/threonine-protein kinase 17B (STK17B) from Homo sapiens (Human).